A 21-amino-acid polypeptide reads, in one-letter code: Complement receptor 3-related protein (21 aa).

It is found in the secreted. Plays a role in adherence of C.albicans to buccal epithelial cells, and in biofilm formation. In Candida albicans (Yeast), this protein is Complement receptor 3-related protein.